The following is a 212-amino-acid chain: MSLFDKKHLVSPADALPGRNTPMPVATLHAVNGHSMTNEPDGMEIAIFAMGCFWGVERLFWQLPGVYSTAAGYTGGYTPNPTYREVCSGDTGHAEAVRIVYDPSVISYEQLLQVFWENHDPAQGMRQGNDHGTQYRSAIYPLTPEQDAAARASLERFQAAMLAADDDRHITTEIANATPFYYAEDDHQQYLHKNPYGYCGIGGIGVCLPPEA.

C52 is a catalytic residue.

Belongs to the MsrA Met sulfoxide reductase family.

It carries out the reaction L-methionyl-[protein] + [thioredoxin]-disulfide + H2O = L-methionyl-(S)-S-oxide-[protein] + [thioredoxin]-dithiol. The enzyme catalyses [thioredoxin]-disulfide + L-methionine + H2O = L-methionine (S)-S-oxide + [thioredoxin]-dithiol. Has an important function as a repair enzyme for proteins that have been inactivated by oxidation. Catalyzes the reversible oxidation-reduction of methionine sulfoxide in proteins to methionine. The sequence is that of Peptide methionine sulfoxide reductase MsrA from Shigella boydii serotype 4 (strain Sb227).